Consider the following 639-residue polypeptide: 1-deoxy-D-xylulose-5-phosphate synthase (639 aa).

Thiamine diphosphate-binding positions include His-79 and 120-122 (AHS). Asp-151 provides a ligand contact to Mg(2+). Thiamine diphosphate contacts are provided by residues 152–153 (GA), Asn-180, Tyr-289, and Glu-371. Asn-180 contacts Mg(2+).

The protein belongs to the transketolase family. DXPS subfamily. As to quaternary structure, homodimer. The cofactor is Mg(2+). Requires thiamine diphosphate as cofactor.

It carries out the reaction D-glyceraldehyde 3-phosphate + pyruvate + H(+) = 1-deoxy-D-xylulose 5-phosphate + CO2. It participates in metabolic intermediate biosynthesis; 1-deoxy-D-xylulose 5-phosphate biosynthesis; 1-deoxy-D-xylulose 5-phosphate from D-glyceraldehyde 3-phosphate and pyruvate: step 1/1. Functionally, catalyzes the acyloin condensation reaction between C atoms 2 and 3 of pyruvate and glyceraldehyde 3-phosphate to yield 1-deoxy-D-xylulose-5-phosphate (DXP). This is 1-deoxy-D-xylulose-5-phosphate synthase from Rhizorhabdus wittichii (strain DSM 6014 / CCUG 31198 / JCM 15750 / NBRC 105917 / EY 4224 / RW1) (Sphingomonas wittichii).